We begin with the raw amino-acid sequence, 382 residues long: UDP-N-acetylglucosamine--N-acetylmuramyl-(pentapeptide) pyrophosphoryl-undecaprenol N-acetylglucosamine transferase (382 aa).

Residues T17–G19, N137, R179, S213, and Q308 each bind UDP-N-acetyl-alpha-D-glucosamine.

The protein belongs to the glycosyltransferase 28 family. MurG subfamily.

It is found in the cell membrane. It carries out the reaction di-trans,octa-cis-undecaprenyl diphospho-N-acetyl-alpha-D-muramoyl-L-alanyl-D-glutamyl-meso-2,6-diaminopimeloyl-D-alanyl-D-alanine + UDP-N-acetyl-alpha-D-glucosamine = di-trans,octa-cis-undecaprenyl diphospho-[N-acetyl-alpha-D-glucosaminyl-(1-&gt;4)]-N-acetyl-alpha-D-muramoyl-L-alanyl-D-glutamyl-meso-2,6-diaminopimeloyl-D-alanyl-D-alanine + UDP + H(+). The protein operates within cell wall biogenesis; peptidoglycan biosynthesis. In terms of biological role, cell wall formation. Catalyzes the transfer of a GlcNAc subunit on undecaprenyl-pyrophosphoryl-MurNAc-pentapeptide (lipid intermediate I) to form undecaprenyl-pyrophosphoryl-MurNAc-(pentapeptide)GlcNAc (lipid intermediate II). This is UDP-N-acetylglucosamine--N-acetylmuramyl-(pentapeptide) pyrophosphoryl-undecaprenol N-acetylglucosamine transferase from Rhodococcus opacus (strain B4).